The chain runs to 299 residues: Urease accessory protein UreD (299 aa).

This sequence belongs to the UreD family. In terms of assembly, ureD, UreF and UreG form a complex that acts as a GTP-hydrolysis-dependent molecular chaperone, activating the urease apoprotein by helping to assemble the nickel containing metallocenter of UreC. The UreE protein probably delivers the nickel.

It localises to the cytoplasm. Its function is as follows. Required for maturation of urease via the functional incorporation of the urease nickel metallocenter. This chain is Urease accessory protein UreD, found in Prochlorococcus marinus (strain MIT 9303).